Reading from the N-terminus, the 189-residue chain is dCTP deaminase, dUMP-forming (189 aa).

Residues 101 to 106, Asp-119, 127 to 129, Gln-148, Tyr-162, and Gln-174 contribute to the dCTP site; these read KSSLGR and TLE. Catalysis depends on Glu-129, which acts as the Proton donor/acceptor. The segment at 163-189 is disordered; that stretch reads GSSEAGSKYQGQRGPTPSKAYLNFNRS.

Belongs to the dCTP deaminase family. Homotrimer.

The enzyme catalyses dCTP + 2 H2O = dUMP + NH4(+) + diphosphate. Its pathway is pyrimidine metabolism; dUMP biosynthesis; dUMP from dCTP: step 1/1. Bifunctional enzyme that catalyzes both the deamination of dCTP to dUTP and the hydrolysis of dUTP to dUMP without releasing the toxic dUTP intermediate. The polypeptide is dCTP deaminase, dUMP-forming (Rhodococcus erythropolis (strain PR4 / NBRC 100887)).